The chain runs to 327 residues: Shiftless antiviral inhibitor of ribosomal frameshifting protein homolog (327 aa).

Over residues 82–91 (EEQQQEEKHA) the composition is skewed to basic and acidic residues. The disordered stretch occupies residues 82 to 121 (EEQQQEEKHAKSSSSGSSGAGPSAKAKKQPSDDRDITELG). Residues 93 to 105 (SSSSGSSGAGPSA) are compositionally biased toward low complexity. The Nuclear localization signal signature appears at 163-179 (RRVPQRKRVSRCHRCKK). The Nuclear export signal signature appears at 304–312 (IESINELIL).

It belongs to the SHFL family.

The protein resides in the cytoplasm. Its subcellular location is the nucleus. The protein localises to the P-body. Inhibits programmed -1 ribosomal frameshifting (-1PRF) of a variety of mRNAs from viruses and cellular genes. Interacts with the -1PRF signal of target mRNA and translating ribosomes and causes premature translation termination at the frameshifting site. May exhibit antiviral activity. This Danio rerio (Zebrafish) protein is Shiftless antiviral inhibitor of ribosomal frameshifting protein homolog (shfl).